A 73-amino-acid chain; its full sequence is Translation initiation factor IF-1 (73 aa).

Residues 1-73 (MPKKEGVIEI…TRGRIVYRYK (73 aa)) form the S1-like domain.

It belongs to the IF-1 family. Component of the 30S ribosomal translation pre-initiation complex which assembles on the 30S ribosome in the order IF-2 and IF-3, IF-1 and N-formylmethionyl-tRNA(fMet); mRNA recruitment can occur at any time during PIC assembly.

It localises to the cytoplasm. Its function is as follows. One of the essential components for the initiation of protein synthesis. Stabilizes the binding of IF-2 and IF-3 on the 30S subunit to which N-formylmethionyl-tRNA(fMet) subsequently binds. Helps modulate mRNA selection, yielding the 30S pre-initiation complex (PIC). Upon addition of the 50S ribosomal subunit IF-1, IF-2 and IF-3 are released leaving the mature 70S translation initiation complex. This is Translation initiation factor IF-1 from Nocardioides sp. (strain ATCC BAA-499 / JS614).